Consider the following 313-residue polypeptide: Myeloma-overexpressed gene protein (313 aa).

The interval 107–129 is disordered; it reads ERNKGDKGAQTGAGLSQEAEDVD.

This is Myeloma-overexpressed gene protein (MYEOV) from Homo sapiens (Human).